A 641-amino-acid polypeptide reads, in one-letter code: Probable potassium transport system protein Kup (641 aa).

The span at 1–14 (MALDSESSASNRQG) shows a compositional bias: polar residues. The interval 1-20 (MALDSESSASNRQGSRNEQD) is disordered. The next 12 membrane-spanning stretches (helical) occupy residues 29 to 49 (LCLT…LYAF), 69 to 89 (ILSL…LLII), 120 to 140 (VLIV…MITP), 156 to 176 (PQLT…LFMV), 188 to 208 (FGPI…NGII), 236 to 256 (VLGG…DMGH), 267 to 287 (FALV…LLLL), 307 to 327 (LVGL…SGVF), 355 to 375 (VYVP…VLHF), 384 to 404 (AFGI…FFVM), 410 to 430 (WNIL…LAFF), and 437 to 457 (ITDG…LMIT).

The protein belongs to the HAK/KUP transporter (TC 2.A.72) family.

Its subcellular location is the cell inner membrane. It carries out the reaction K(+)(in) + H(+)(in) = K(+)(out) + H(+)(out). Transport of potassium into the cell. Likely operates as a K(+):H(+) symporter. This is Probable potassium transport system protein Kup from Nitrosomonas eutropha (strain DSM 101675 / C91 / Nm57).